The chain runs to 327 residues: E3 ubiquitin ligase Rnf121 (327 aa).

An N-acetylalanine modification is found at alanine 2. 5 helical membrane-spanning segments follow: residues 50–70, 79–99, 100–120, 148–168, and 172–192; these read MHAEMVLILIATLVVAQLLLV, SYNMVTLFQMWVVPLYFTVKL, HWWRFLVIWIFFSAVTAFVTF, ATGIVGYMAVMFTLFGLNLLF, and PEDAMDFGISLLFYGLYYGVL. Residues 226-276 form an RING-type; atypical zinc finger; that stretch reads CAVCGQQIFVDVNEEGIIENTYRLSCNHVFHEFCIRGWCIVGKKQTCPYCK. Residues 306–326 form a helical membrane-spanning segment; it reads LVAWQPVIIGLVQGISYILGL.

This sequence belongs to the RNF121 family.

The protein resides in the endoplasmic reticulum membrane. The enzyme catalyses S-ubiquitinyl-[E2 ubiquitin-conjugating enzyme]-L-cysteine + [acceptor protein]-L-lysine = [E2 ubiquitin-conjugating enzyme]-L-cysteine + N(6)-ubiquitinyl-[acceptor protein]-L-lysine.. The protein operates within protein modification; protein ubiquitination. Its function is as follows. E3 ubiquitin ligase which accepts ubiquitin and transfers it to substrates thereby promoting their degradation by the endoplasmic reticulum-associated degradation (ERAD) pathway which is a pathway involved in ubiquitin-dependent degradation of misfolded endoplasmic reticulum proteins. May regulate the unfolded protein response to reduce endoplasmic reticulum stress. The protein is E3 ubiquitin ligase Rnf121 (Rnf121) of Mus musculus (Mouse).